The following is a 153-amino-acid chain: Large ribosomal subunit protein uL22 (153 aa).

This sequence belongs to the universal ribosomal protein uL22 family. Part of the 50S ribosomal subunit.

In terms of biological role, this protein binds specifically to 23S rRNA. It makes multiple contacts with different domains of the 23S rRNA in the assembled 50S subunit and ribosome. Functionally, the globular domain of the protein is located near the polypeptide exit tunnel on the outside of the subunit, while an extended beta-hairpin is found that lines the wall of the exit tunnel in the center of the 70S ribosome. This chain is Large ribosomal subunit protein uL22, found in Methanococcus maripaludis (strain DSM 14266 / JCM 13030 / NBRC 101832 / S2 / LL).